The primary structure comprises 160 residues: Endoplasmic reticulum transmembrane protein 2 (160 aa).

Topologically, residues 1-2 are lumenal; it reads MG. Residues 3 to 23 form a helical membrane-spanning segment; it reads VYLAVLFSLLVIEMAILFILV. The Cytoplasmic segment spans residues 24-45; the sequence is LPLPQRMRRWLYIRYSIISTNK. A helical membrane pass occupies residues 46–66; sequence KFRTYMVGIMIFVGLLFIDSW. Residues 67–103 lie on the Lumenal side of the membrane; the sequence is KRSQIRVSTYRNQKNPYIINSVTPVDALASRAYNQRN. A helical transmembrane segment spans residues 104-124; sequence VYISGFIIYFYICILTVMSIL. Over 125–160 the chain is Cytoplasmic; it reads RRIVEWNDKMKAGDDILKEKLRRKQKYLEELQKKKF. The short motif at 157-160 is the Di-lysine motif element; sequence KKKF.

The protein belongs to the BCAP29/BCAP31 family.

The protein localises to the endoplasmic reticulum membrane. Functionally, may play a role in anterograde transport of membrane proteins from the endoplasmic reticulum to the Golgi. This Saccharomyces cerevisiae (strain ATCC 204508 / S288c) (Baker's yeast) protein is Endoplasmic reticulum transmembrane protein 2 (YET2).